The primary structure comprises 153 residues: Probable trafficking protein particle complex subunit 2 (153 aa).

It belongs to the TRAPP small subunits family. Sedlin subfamily. As to quaternary structure, part of the multisubunit TRAPP (transport protein particle) complex.

The protein resides in the cytoplasm. It localises to the perinuclear region. It is found in the endoplasmic reticulum. The protein localises to the golgi apparatus. Its function is as follows. May play a role in vesicular transport from endoplasmic reticulum to Golgi. This chain is Probable trafficking protein particle complex subunit 2, found in Nematostella vectensis (Starlet sea anemone).